The following is a 499-amino-acid chain: Lysine--tRNA ligase (499 aa).

The Mg(2+) site is built by glutamate 408 and glutamate 415.

It belongs to the class-II aminoacyl-tRNA synthetase family. As to quaternary structure, homodimer. Mg(2+) is required as a cofactor.

It is found in the cytoplasm. The enzyme catalyses tRNA(Lys) + L-lysine + ATP = L-lysyl-tRNA(Lys) + AMP + diphosphate. This is Lysine--tRNA ligase from Bacillus cereus (strain B4264).